The sequence spans 540 residues: Glucose-6-phosphate isomerase (540 aa).

Residue Glu350 is the Proton donor of the active site. Catalysis depends on residues His381 and Lys503.

Belongs to the GPI family.

Its subcellular location is the cytoplasm. The catalysed reaction is alpha-D-glucose 6-phosphate = beta-D-fructose 6-phosphate. Its pathway is carbohydrate biosynthesis; gluconeogenesis. It functions in the pathway carbohydrate degradation; glycolysis; D-glyceraldehyde 3-phosphate and glycerone phosphate from D-glucose: step 2/4. In terms of biological role, catalyzes the reversible isomerization of glucose-6-phosphate to fructose-6-phosphate. This is Glucose-6-phosphate isomerase from Burkholderia cenocepacia (strain ATCC BAA-245 / DSM 16553 / LMG 16656 / NCTC 13227 / J2315 / CF5610) (Burkholderia cepacia (strain J2315)).